Consider the following 417-residue polypeptide: Serine hydroxymethyltransferase 2 (417 aa).

(6S)-5,6,7,8-tetrahydrofolate contacts are provided by residues leucine 121 and 125-127 (GHL). Position 230 is an N6-(pyridoxal phosphate)lysine (lysine 230). Position 355-357 (355-357 (SPF)) interacts with (6S)-5,6,7,8-tetrahydrofolate.

It belongs to the SHMT family. As to quaternary structure, homodimer. It depends on pyridoxal 5'-phosphate as a cofactor.

The protein localises to the cytoplasm. The catalysed reaction is (6R)-5,10-methylene-5,6,7,8-tetrahydrofolate + glycine + H2O = (6S)-5,6,7,8-tetrahydrofolate + L-serine. It participates in one-carbon metabolism; tetrahydrofolate interconversion. The protein operates within amino-acid biosynthesis; glycine biosynthesis; glycine from L-serine: step 1/1. Catalyzes the reversible interconversion of serine and glycine with tetrahydrofolate (THF) serving as the one-carbon carrier. This reaction serves as the major source of one-carbon groups required for the biosynthesis of purines, thymidylate, methionine, and other important biomolecules. Also exhibits THF-independent aldolase activity toward beta-hydroxyamino acids, producing glycine and aldehydes, via a retro-aldol mechanism. The sequence is that of Serine hydroxymethyltransferase 2 from Pseudomonas syringae pv. syringae (strain B728a).